A 393-amino-acid chain; its full sequence is MHQPAIMQRALAVVALLAAAAAIAAAQGESPELLPFAVGAAPEGCDVGEGEWVFDEAARPWYAEEECPYIQPDLTCQAHGRPDAAYQRWRWQPRDCSLPSFNATGMLEMLRGKRMLFVGDSLLRGQYTSLLCLLHRGAPGGGGGSRSFETVDSLSIFRAKDYDATIEFYWAPMLAESNSDGAAVPDDRLIRGAPMNKHSSFWKGADVLVFNSYLWWMTGDKIQILRGADEDMSKDIVEMEAAEAYRLVLHQVTRWLEGNVDPKSARVFFVTASPSHAGAGGECYDQTTPVGAADAASYCGSTSRRMVQVAGEVLGASRVPVGVVNVTRMSELRRDAHTQVYREQRWAKPTAEQLAADPRSYADCTHWCLPGVPDAWNELLYWKLFFPARDEAI.

The Cytoplasmic segment spans residues 1-9 (MHQPAIMQR). Residues 10–26 (ALAVVALLAAAAAIAAA) traverse the membrane as a helical; Signal-anchor for type II membrane protein segment. Residues 27–393 (QGESPELLPF…LFFPARDEAI (367 aa)) lie on the Lumenal side of the membrane. 4 disulfides stabilise this stretch: Cys45–Cys96, Cys67–Cys132, Cys76–Cys368, and Cys283–Cys364. The N-linked (GlcNAc...) asparagine glycan is linked to Asn102. A GDS motif motif is present at residues 119 to 121 (GDS). The active-site Nucleophile is the Ser121. The N-linked (GlcNAc...) asparagine glycan is linked to Asn325. The active-site Proton donor is Asp363. Residues 363–366 (DCTH) carry the DXXH motif motif. Residue His366 is the Proton acceptor of the active site.

Belongs to the PC-esterase family. TBL subfamily. In terms of tissue distribution, expressed in roots, leaves and stems.

Its subcellular location is the golgi apparatus membrane. In terms of biological role, probable xylan acetyltransferase required for 2-O- and 3-O-monoacetylation of xylosyl residues in xylan. Possesses extremely low activity in vitro. In Oryza sativa subsp. japonica (Rice), this protein is Probable xylan O-acetyltransferase 11.